The chain runs to 56 residues: Large ribosomal subunit protein eL20 (56 aa).

Positions 1–24 are disordered; the sequence is MSTYTVRGSFPARDGPQQFEKEVE.

This sequence belongs to the eukaryotic ribosomal protein eL20 family. Part of the 50S ribosomal subunit. Binds 23S rRNA.

This chain is Large ribosomal subunit protein eL20, found in Haloarcula marismortui (strain ATCC 43049 / DSM 3752 / JCM 8966 / VKM B-1809) (Halobacterium marismortui).